We begin with the raw amino-acid sequence, 56 residues long: Small ribosomal subunit protein uS14 (56 aa).

The protein belongs to the universal ribosomal protein uS14 family.

In Kluyveromyces lactis (strain ATCC 8585 / CBS 2359 / DSM 70799 / NBRC 1267 / NRRL Y-1140 / WM37) (Yeast), this protein is Small ribosomal subunit protein uS14 (RPS29).